A 447-amino-acid chain; its full sequence is MGRTYIVEETVGQYLSSINLQGKPFVSGLLIGQCSSQKDYVILATRTPPKEEQNDKVKQPRAKLDNLDEEWATEHASQVSRMLPGGLVVLGIFIITTLELADDFQNALRRLIFSMEKSMSRKRLWDVTEDEVSERVTLHICSSTKKISCRTYDVQDPKSSARPADWKYQSRVSASWLSLDCTVHVNIHIPLSATSVSYTLEKNTKSGLTRWAKQIENGVYLINGQVKGNDCDLLEGQKKSRGNTQATAHSFDVRVLTQLLLNSDHRSTATVQICSGSVNLRGNVKCRAYIHSNRPKVKDAVQAVKRDILNTVADRCEILFEDLLLNEIPEKKNYELPQRVFVPLPGSTVMLCDYKFGDESAEEIRDHFSEMLDHEIQIEDLEIAEEVNTACMTSSVNSEASLTNTSEEQPEQPKKTIGVKIQQNIGVIAALAVAVLAAGISFHYFSD.

The next 2 membrane-spanning stretches (helical) occupy residues 82 to 102 and 425 to 445; these read MLPGGLVVLGIFIITTLELAD and IGVIAALAVAVLAAGISFHYF.

It belongs to the ODR-4 family. Ubiquitously expressed.

It localises to the membrane. In terms of biological role, may play a role in the trafficking of a subset of G-protein coupled receptors. This is Protein odr-4 homolog (Odr4) from Mus musculus (Mouse).